Here is a 293-residue protein sequence, read N- to C-terminus: Phosphoribosylaminoimidazole-succinocarboxamide synthase (293 aa).

It belongs to the SAICAR synthetase family.

The catalysed reaction is 5-amino-1-(5-phospho-D-ribosyl)imidazole-4-carboxylate + L-aspartate + ATP = (2S)-2-[5-amino-1-(5-phospho-beta-D-ribosyl)imidazole-4-carboxamido]succinate + ADP + phosphate + 2 H(+). It functions in the pathway purine metabolism; IMP biosynthesis via de novo pathway; 5-amino-1-(5-phospho-D-ribosyl)imidazole-4-carboxamide from 5-amino-1-(5-phospho-D-ribosyl)imidazole-4-carboxylate: step 1/2. This is Phosphoribosylaminoimidazole-succinocarboxamide synthase from Bordetella parapertussis (strain 12822 / ATCC BAA-587 / NCTC 13253).